We begin with the raw amino-acid sequence, 332 residues long: tRNA-dihydrouridine(20/20a) synthase (332 aa).

FMN contacts are provided by residues 20 to 22 (PMM) and Gln73. Catalysis depends on Cys103, which acts as the Proton donor. FMN is bound by residues Lys142, His174, 214–216 (NGG), and 236–237 (GR).

This sequence belongs to the Dus family. DusA subfamily. FMN is required as a cofactor.

It catalyses the reaction 5,6-dihydrouridine(20) in tRNA + NADP(+) = uridine(20) in tRNA + NADPH + H(+). It carries out the reaction 5,6-dihydrouridine(20) in tRNA + NAD(+) = uridine(20) in tRNA + NADH + H(+). The enzyme catalyses 5,6-dihydrouridine(20a) in tRNA + NADP(+) = uridine(20a) in tRNA + NADPH + H(+). The catalysed reaction is 5,6-dihydrouridine(20a) in tRNA + NAD(+) = uridine(20a) in tRNA + NADH + H(+). Catalyzes the synthesis of 5,6-dihydrouridine (D), a modified base found in the D-loop of most tRNAs, via the reduction of the C5-C6 double bond in target uridines. Specifically modifies U20 and U20a in tRNAs. The sequence is that of tRNA-dihydrouridine(20/20a) synthase from Pseudomonas aeruginosa (strain ATCC 15692 / DSM 22644 / CIP 104116 / JCM 14847 / LMG 12228 / 1C / PRS 101 / PAO1).